A 238-amino-acid chain; its full sequence is DNA repair protein RecO (238 aa).

It belongs to the RecO family.

In terms of biological role, involved in DNA repair and RecF pathway recombination. The protein is DNA repair protein RecO of Anaplasma marginale (strain Florida).